The sequence spans 312 residues: Ribosomal protein L11 methyltransferase (312 aa).

Thr162, Gly183, Asp205, and Asn248 together coordinate S-adenosyl-L-methionine.

Belongs to the methyltransferase superfamily. PrmA family.

It is found in the cytoplasm. The catalysed reaction is L-lysyl-[protein] + 3 S-adenosyl-L-methionine = N(6),N(6),N(6)-trimethyl-L-lysyl-[protein] + 3 S-adenosyl-L-homocysteine + 3 H(+). Its function is as follows. Methylates ribosomal protein L11. The chain is Ribosomal protein L11 methyltransferase from Anoxybacillus flavithermus (strain DSM 21510 / WK1).